We begin with the raw amino-acid sequence, 826 residues long: Arsenite oxidase subunit AioA (826 aa).

The [3Fe-4S] cluster site is built by cysteine 22, cysteine 25, and cysteine 29. The substrate site is built by histidine 196, glutamate 204, arginine 419, and histidine 423.

Belongs to the prokaryotic molybdopterin-containing oxidoreductase family. As to quaternary structure, heterodimer consisting of a large and a small subunit. [3Fe-4S] cluster is required as a cofactor. Mo-bis(molybdopterin guanine dinucleotide) serves as cofactor.

It carries out the reaction 2 oxidized [azurin] + arsenite + H2O = 2 reduced [azurin] + arsenate + 3 H(+). Involved in the detoxification of arsenic. Oxidizes As(III)O3(3-) (arsenite) to the somewhat less toxic As(V)O4(3-) (arsenate). In Herminiimonas arsenicoxydans, this protein is Arsenite oxidase subunit AioA (aioA).